Consider the following 440-residue polypeptide: Thymidine phosphorylase (440 aa).

The protein belongs to the thymidine/pyrimidine-nucleoside phosphorylase family. Homodimer.

It catalyses the reaction thymidine + phosphate = 2-deoxy-alpha-D-ribose 1-phosphate + thymine. Its pathway is pyrimidine metabolism; dTMP biosynthesis via salvage pathway; dTMP from thymine: step 1/2. Its function is as follows. The enzymes which catalyze the reversible phosphorolysis of pyrimidine nucleosides are involved in the degradation of these compounds and in their utilization as carbon and energy sources, or in the rescue of pyrimidine bases for nucleotide synthesis. The sequence is that of Thymidine phosphorylase from Burkholderia pseudomallei (strain 1106a).